The chain runs to 59 residues: UPF0434 protein Sbal_1685 (59 aa).

The protein belongs to the UPF0434 family.

The chain is UPF0434 protein Sbal_1685 from Shewanella baltica (strain OS155 / ATCC BAA-1091).